The chain runs to 353 residues: C2 calcium-dependent domain-containing protein 4D (353 aa).

The disordered stretch occupies residues 135 to 191; that stretch reads CRAPDSDTASSPDSSPFGSPRPGLGRRRVSRPHSLSPEKASSADTSPHSPRRAGPPT. Residues 140-150 are compositionally biased toward low complexity; that stretch reads SDTASSPDSSP. The C2 domain maps to 217 to 343; that stretch reads RGGQLRLSTE…PPLGGGLGPG (127 aa).

This chain is C2 calcium-dependent domain-containing protein 4D (C2CD4D), found in Homo sapiens (Human).